Here is a 68-residue protein sequence, read N- to C-terminus: Amphipathic peptide OcyC1 (68 aa).

The first 23 residues, 1–23 (MKAQLCILLIALVLFQTFSQSDA), serve as a signal peptide directing secretion. Residue Phe36 is modified to Phenylalanine amide. The propeptide occupies 38–68 (RRGLNDLDDLDELFDGEISQADVDFLNELMR).

The protein belongs to the non-disulfide-bridged peptide (NDBP) superfamily. Short antimicrobial peptide (group 4) family. As to expression, expressed by the venom gland.

It is found in the secreted. The protein resides in the target cell membrane. In terms of biological role, antimicrobial peptide. Inhibits the growth of Gram-positive and Gram-negative bacteria. Shows antifungal activity with MIC values ranging from 12.5 to 25 uM. Also shows an inhibitory activity on C.albicans biofilms at high concentrations. Shows low cytotoxic activity and has weak hemolytic activity. The sequence is that of Amphipathic peptide OcyC1 from Opisthacanthus cayaporum (South American scorpion).